Consider the following 136-residue polypeptide: NADH-quinone oxidoreductase subunit A (136 aa).

A run of 3 helical transmembrane segments spans residues 20-40, 70-90, and 99-119; these read LAVY…VAWW, VPFY…AYIL, and LGWA…VGLV.

The protein belongs to the complex I subunit 3 family. In terms of assembly, NDH-1 is composed of 14 different subunits. Subunits NuoA, H, J, K, L, M, N constitute the membrane sector of the complex.

The protein resides in the cell inner membrane. The enzyme catalyses a quinone + NADH + 5 H(+)(in) = a quinol + NAD(+) + 4 H(+)(out). NDH-1 shuttles electrons from NADH, via FMN and iron-sulfur (Fe-S) centers, to quinones in the respiratory chain. The immediate electron acceptor for the enzyme in this species is believed to be ubiquinone. Couples the redox reaction to proton translocation (for every two electrons transferred, four hydrogen ions are translocated across the cytoplasmic membrane), and thus conserves the redox energy in a proton gradient. The polypeptide is NADH-quinone oxidoreductase subunit A (Syntrophobacter fumaroxidans (strain DSM 10017 / MPOB)).